Reading from the N-terminus, the 829-residue chain is Periplasmic nitrate reductase (829 aa).

Positions methionine 1–alanine 29 form a signal peptide, tat-type signal. In terms of domain architecture, 4Fe-4S Mo/W bis-MGD-type spans isoleucine 41 to aspartate 97. [4Fe-4S] cluster-binding residues include cysteine 48, cysteine 51, cysteine 55, and cysteine 83. Residues lysine 85, glutamine 152, asparagine 177, cysteine 181, tryptophan 214–methionine 221, serine 245–histidine 249, glutamine 264–aspartate 266, methionine 374, glutamine 378, asparagine 484, serine 510–aspartate 511, lysine 533, aspartate 560, and threonine 718–threonine 727 contribute to the Mo-bis(molybdopterin guanine dinucleotide) site. Phenylalanine 794 serves as a coordination point for substrate. Mo-bis(molybdopterin guanine dinucleotide) contacts are provided by asparagine 802 and lysine 819.

It belongs to the prokaryotic molybdopterin-containing oxidoreductase family. NasA/NapA/NarB subfamily. In terms of assembly, component of the periplasmic nitrate reductase NapAB complex composed of NapA and NapB. [4Fe-4S] cluster is required as a cofactor. It depends on Mo-bis(molybdopterin guanine dinucleotide) as a cofactor. Predicted to be exported by the Tat system. The position of the signal peptide cleavage has not been experimentally proven.

It localises to the periplasm. It carries out the reaction 2 Fe(II)-[cytochrome] + nitrate + 2 H(+) = 2 Fe(III)-[cytochrome] + nitrite + H2O. Its function is as follows. Catalytic subunit of the periplasmic nitrate reductase complex NapAB. Receives electrons from NapB and catalyzes the reduction of nitrate to nitrite. This is Periplasmic nitrate reductase from Vibrio campbellii (strain ATCC BAA-1116).